The following is a 1441-amino-acid chain: Probable cleavage and polyadenylation specificity factor subunit 1 (1441 aa).

The protein belongs to the CPSF1 family. In terms of assembly, CPSF is a heterotetramer composed of four distinct subunits 160, 100, 70 and 30 kDa.

It localises to the nucleus. Its function is as follows. CPSF plays a key role in pre-mRNA 3'-end formation, recognizing the AAUAAA signal sequence and interacting with poly(A)polymerase and other factors to bring about cleavage and poly(A) addition. This subunit is involved in the RNA recognition step of the polyadenylation reaction. This Oryza sativa subsp. japonica (Rice) protein is Probable cleavage and polyadenylation specificity factor subunit 1.